We begin with the raw amino-acid sequence, 316 residues long: L-lactate dehydrogenase (316 aa).

Residues valine 16, aspartate 37, lysine 42, tyrosine 68, and 82 to 83 (GA) contribute to the NAD(+) site. Residues glutamine 85 and arginine 91 each contribute to the substrate site. Residues serine 104, 121 to 123 (AAN), and serine 146 each bind NAD(+). 123-126 (NPVD) provides a ligand contact to substrate. 151-154 (DSAR) is a binding site for substrate. 2 residues coordinate beta-D-fructose 1,6-bisphosphate: arginine 156 and histidine 171. Catalysis depends on histidine 178, which acts as the Proton acceptor. Phosphotyrosine is present on tyrosine 222. Threonine 231 contributes to the substrate binding site.

This sequence belongs to the LDH/MDH superfamily. LDH family. As to quaternary structure, homotetramer.

The protein resides in the cytoplasm. The enzyme catalyses (S)-lactate + NAD(+) = pyruvate + NADH + H(+). Its pathway is fermentation; pyruvate fermentation to lactate; (S)-lactate from pyruvate: step 1/1. Its activity is regulated as follows. Allosterically activated by fructose 1,6-bisphosphate (FBP). In terms of biological role, catalyzes the conversion of lactate to pyruvate. This chain is L-lactate dehydrogenase, found in Staphylococcus epidermidis (strain ATCC 12228 / FDA PCI 1200).